Reading from the N-terminus, the 369-residue chain is S-adenosylmethionine:tRNA ribosyltransferase-isomerase (369 aa).

Belongs to the QueA family. As to quaternary structure, monomer.

It is found in the cytoplasm. It carries out the reaction 7-aminomethyl-7-carbaguanosine(34) in tRNA + S-adenosyl-L-methionine = epoxyqueuosine(34) in tRNA + adenine + L-methionine + 2 H(+). Its pathway is tRNA modification; tRNA-queuosine biosynthesis. Its function is as follows. Transfers and isomerizes the ribose moiety from AdoMet to the 7-aminomethyl group of 7-deazaguanine (preQ1-tRNA) to give epoxyqueuosine (oQ-tRNA). This is S-adenosylmethionine:tRNA ribosyltransferase-isomerase from Acaryochloris marina (strain MBIC 11017).